Here is a 524-residue protein sequence, read N- to C-terminus: Metal transporter Nramp2 (524 aa).

The interval 34 to 58 is disordered; sequence AYDSDDKVSIAVSDSDSEDGGGGGG. The next 12 helical transmembrane spans lie at 70-90, 98-118, 155-175, 179-199, 207-227, 253-273, 295-315, 341-361, 389-409, 420-440, 457-477, and 486-506; these read LWRF…PGNL, AAAG…GALV, LALV…IKIL, TVPL…FLFL, LEAF…IMFG, AVGI…SALV, IESI…TTVF, YGTA…ASGQ, AMIT…FFDT, ALNV…ITLV, VISW…ILSF, and LVRS…VYLI.

It belongs to the NRAMP (TC 2.A.55) family.

The protein resides in the membrane. Its function is as follows. Probable metal transporter. This chain is Metal transporter Nramp2 (NRAMP2), found in Oryza sativa subsp. japonica (Rice).